We begin with the raw amino-acid sequence, 218 residues long: Superoxide dismutase [Mn] 2, mitochondrial (218 aa).

Residues 1–24 constitute a mitochondrion transit peptide; it reads MLQSTARTASKLVQPVAGVLAVRS. The Mn(2+) site is built by His50, His98, Asp179, and His183.

It belongs to the iron/manganese superoxide dismutase family. Homotetramer. It depends on Mn(2+) as a cofactor. As to expression, expressed in pharynx and rectum. Upon thermal stress, expressed in vulva, body wall muscles and hypodermis.

It localises to the mitochondrion. It carries out the reaction 2 superoxide + 2 H(+) = H2O2 + O2. In terms of biological role, destroys superoxide anion radicals which are normally produced within the cells and which are toxic to biological systems. This is Superoxide dismutase [Mn] 2, mitochondrial (sod-3) from Caenorhabditis elegans.